Here is a 261-residue protein sequence, read N- to C-terminus: Cytochrome c oxidase subunit 3 (261 aa).

The Mitochondrial matrix portion of the chain corresponds to 1-15 (MTHQTHAYHTVNPSP). The chain crosses the membrane as a helical span at residues 16-34 (WPLTGALSALLMTSGLIMW). Topologically, residues 35 to 40 (FHFNSP) are mitochondrial intermembrane. Residues 41-66 (LLLVLGLTTNFLTMYQWWRDIIREST) traverse the membrane as a helical segment. Residues 67-72 (FQGHHT) are Mitochondrial matrix-facing. A helical membrane pass occupies residues 73 to 105 (TIVQKGLRYGMILFIVSEVFFFAGFFWAFYHSS). Over 106-128 (LAPTPELGGCWPPTGINPLNPLE) the chain is Mitochondrial intermembrane. The helical transmembrane segment at 129 to 152 (VPLLNTSVLLASGVSITWAHHSLM) threads the bilayer. Over 153–155 (EGH) the chain is Mitochondrial matrix. Residues 156-183 (RKHMLQALFITIALGVYFTLLQASEYYE) form a helical membrane-spanning segment. Topologically, residues 184–190 (APFTISD) are mitochondrial intermembrane. Residues 191-223 (GIYGSTFFVATGFHGLHVIIGSSFLIVCFMRQL) traverse the membrane as a helical segment. Residues 224 to 232 (KFHFTSSHH) lie on the Mitochondrial matrix side of the membrane. Residues 233–256 (FGFEAAAWYWHFVDVVWLFLYVSI) traverse the membrane as a helical segment. The Mitochondrial intermembrane segment spans residues 257 to 261 (YWWGS).

This sequence belongs to the cytochrome c oxidase subunit 3 family. In terms of assembly, component of the cytochrome c oxidase (complex IV, CIV), a multisubunit enzyme composed of 14 subunits. The complex is composed of a catalytic core of 3 subunits MT-CO1, MT-CO2 and MT-CO3, encoded in the mitochondrial DNA, and 11 supernumerary subunits COX4I, COX5A, COX5B, COX6A, COX6B, COX6C, COX7A, COX7B, COX7C, COX8 and NDUFA4, which are encoded in the nuclear genome. The complex exists as a monomer or a dimer and forms supercomplexes (SCs) in the inner mitochondrial membrane with NADH-ubiquinone oxidoreductase (complex I, CI) and ubiquinol-cytochrome c oxidoreductase (cytochrome b-c1 complex, complex III, CIII), resulting in different assemblies (supercomplex SCI(1)III(2)IV(1) and megacomplex MCI(2)III(2)IV(2)).

It is found in the mitochondrion inner membrane. The catalysed reaction is 4 Fe(II)-[cytochrome c] + O2 + 8 H(+)(in) = 4 Fe(III)-[cytochrome c] + 2 H2O + 4 H(+)(out). Its function is as follows. Component of the cytochrome c oxidase, the last enzyme in the mitochondrial electron transport chain which drives oxidative phosphorylation. The respiratory chain contains 3 multisubunit complexes succinate dehydrogenase (complex II, CII), ubiquinol-cytochrome c oxidoreductase (cytochrome b-c1 complex, complex III, CIII) and cytochrome c oxidase (complex IV, CIV), that cooperate to transfer electrons derived from NADH and succinate to molecular oxygen, creating an electrochemical gradient over the inner membrane that drives transmembrane transport and the ATP synthase. Cytochrome c oxidase is the component of the respiratory chain that catalyzes the reduction of oxygen to water. Electrons originating from reduced cytochrome c in the intermembrane space (IMS) are transferred via the dinuclear copper A center (CU(A)) of subunit 2 and heme A of subunit 1 to the active site in subunit 1, a binuclear center (BNC) formed by heme A3 and copper B (CU(B)). The BNC reduces molecular oxygen to 2 water molecules using 4 electrons from cytochrome c in the IMS and 4 protons from the mitochondrial matrix. The chain is Cytochrome c oxidase subunit 3 (MT-CO3) from Dasypus novemcinctus (Nine-banded armadillo).